The following is an 860-amino-acid chain: Transcription factor E2F8 (860 aa).

Disordered stretches follow at residues 1–27 (MENQKENLFSEPHKRGLMKSPLHPSSK) and 38–57 (DLGPLTTPTKPKEVSQGEPW). Ser-71 and Ser-102 each carry phosphoserine. 2 consecutive DNA-binding regions follow at residues 113–182 (RKEK…TWHG) and 261–347 (RKDK…KWTG). Disordered regions lie at residues 407 to 433 (RRKISSAPSSPVKSNKAESSQNSPPVP), 532 to 616 (LTPP…PKED), and 745 to 803 (QMSA…QPVP). 2 positions are modified to phosphoserine: Ser-412 and Ser-416. Composition is skewed to polar residues over residues 412–429 (SAPSSPVKSNKAESSQNS) and 542–554 (VCPTQPSNATGSK). Positions 555-565 (DPTDAPAEKTA) are enriched in basic and acidic residues.

It belongs to the E2F/DP family. As to quaternary structure, interacts with HIF1A. Homodimer and heterodimer: mainly forms homodimers and, to a lesser extent, heterodimers with E2F8. Dimerization is important for DNA-binding. In terms of tissue distribution, highly expressed in liver, skin, thymus and testis. Expressed in trophoblast giant cells throughout placenta development (at protein level).

It localises to the nucleus. Functionally, atypical E2F transcription factor that participates in various processes such as angiogenesis and polyploidization of specialized cells. Mainly acts as a transcription repressor that binds DNA independently of DP proteins and specifically recognizes the E2 recognition site 5'-TTTC[CG]CGC-3'. Directly represses transcription of classical E2F transcription factors such as E2F1: component of a feedback loop in S phase by repressing the expression of E2F1, thereby preventing p53/TP53-dependent apoptosis. Plays a key role in polyploidization of cells in placenta and liver by regulating the endocycle, probably by repressing genes promoting cytokinesis and antagonizing action of classical E2F proteins (E2F1, E2F2 and/or E2F3). Required for placental development by promoting polyploidization of trophoblast giant cells. Acts as a promoter of sprouting angiogenesis, possibly by acting as a transcription activator: associates with HIF1A, recognizes and binds the VEGFA promoter, which is different from canonical E2 recognition site, and activates expression of the VEGFA gene. The protein is Transcription factor E2F8 (E2f8) of Mus musculus (Mouse).